The primary structure comprises 350 residues: Vancomycin C-type resistance protein VanC2 (350 aa).

Active-site residues include Glu-14 and Ser-187. The region spanning His-141 to Val-343 is the ATP-grasp domain. An ATP-binding site is contributed by Ile-171–Gly-226. Residues Asp-297, Glu-310, and Asn-312 each coordinate Mg(2+). Residues Asp-297, Glu-310, and Asn-312 each contribute to the Mn(2+) site. The active site involves Ser-321.

This sequence belongs to the D-alanine--D-alanine ligase family. Homodimer. Requires Mg(2+) as cofactor. Mn(2+) serves as cofactor.

It is found in the cell membrane. It carries out the reaction D-serine + D-alanine + ATP = D-alanyl-D-serine + ADP + phosphate + H(+). It participates in cell wall biogenesis; peptidoglycan biosynthesis. Its activity is regulated as follows. Inhibited by D-cycloserine. In terms of biological role, required for low-level resistance to the glycopeptide antibiotic vancomycin. D-alanine--D-alanine ligase of altered specificity, which catalyzes synthesis of D-Ala-D-Ser; produces a peptidoglycan which does not terminate in D-alanine but in D-serine, thus probably reducing affinity for vancomycin. Only insignificant catalytic synthesis of D-Ala-D-Ala in vitro. The chain is Vancomycin C-type resistance protein VanC2 from Enterococcus casseliflavus (Enterococcus flavescens).